The sequence spans 510 residues: NAD(P) transhydrogenase subunit alpha (510 aa).

Over 1–401 (MRIGIPRERL…EEKCTCSPWR (401 aa)) the chain is Cytoplasmic. Residues 120–122 (RIS), Val175, 195–197 (DTR), Glu238, and Leu257 contribute to the NAD(+) site. Transmembrane regions (helical) follow at residues 402 to 422 (KYALMALAIILFGWMASVAPK) and 423 to 443 (EFLGHFTVFALACVVGYYVVW). The Cytoplasmic portion of the chain corresponds to 444–452 (NVSHALHTP). The helical transmembrane segment at 453–473 (LMSVTNAISGIIVVGALLQIG) threads the bilayer. At 474–476 (QGG) the chain is on the periplasmic side. The helical transmembrane segment at 477-497 (WVSFLSFIAVLIASINIFGGF) threads the bilayer. Topologically, residues 498 to 510 (TVTQRMLKMFRKN) are cytoplasmic.

The protein belongs to the AlaDH/PNT family. As to quaternary structure, heterodimer of an alpha (PntA) and a beta (PntB) chain. Alpha subunit serves as the dimerization unit.

It is found in the cell inner membrane. The catalysed reaction is NAD(+) + NADPH + H(+)(in) = NADH + NADP(+) + H(+)(out). Its function is as follows. The transhydrogenation between NADH and NADP is coupled to respiration and ATP hydrolysis and functions as a proton pump across the membrane. This Escherichia coli (strain K12) protein is NAD(P) transhydrogenase subunit alpha (pntA).